The primary structure comprises 331 residues: MSIAAKDIEPADIPGNLQGGEYSPYHVFSAEEWSRFRADTPLTLTADEVQRLRSLNDPVDLDEVRRIYLSLSRLLSAHVEASQILFRQRTRFLSMSNETKTPFVIGVAGSVAVGKSTTARILAELLARWPSSPKVDLVTTDGFLYPNAVLQRENLMDRKGFPASYDIGALLRFLSAIKAGRPNVKAPTYSHLTYDVIPDQFQVIDRPDILIFEGINVLQSRDLPADGKIVPMVSDFFDFSIYIDAEESLIHSWYVNRFMRLRETAFQSPQSFFHRYATISEDAARAIAEGLWHNINLKNLHQNILPTRPRADLILQKGPNHLTQTVALRKL.

109–116 serves as a coordination point for ATP; the sequence is GSVAVGKS.

This sequence belongs to the prokaryotic pantothenate kinase family.

The protein localises to the cytoplasm. The catalysed reaction is (R)-pantothenate + ATP = (R)-4'-phosphopantothenate + ADP + H(+). Its pathway is cofactor biosynthesis; coenzyme A biosynthesis; CoA from (R)-pantothenate: step 1/5. The sequence is that of Pantothenate kinase from Rhizobium meliloti (strain 1021) (Ensifer meliloti).